The following is a 90-amino-acid chain: DNA-binding protein HU (90 aa).

The protein belongs to the bacterial histone-like protein family. As to quaternary structure, homodimer.

Functionally, histone-like DNA-binding protein which is capable of wrapping DNA to stabilize it, and thus to prevent its denaturation under extreme environmental conditions. This Haemophilus influenzae (strain ATCC 51907 / DSM 11121 / KW20 / Rd) protein is DNA-binding protein HU (hup).